A 60-amino-acid chain; its full sequence is Large ribosomal subunit protein bL32 (60 aa).

Basic residues predominate over residues 1–20 (MAVQKSRKSRSRRDMRRSHH). A disordered region spans residues 1-60 (MAVQKSRKSRSRRDMRRSHHHMEVAELSIDATTGEKHRRHHMTKDGFYRGRQLFKASQED).

Belongs to the bacterial ribosomal protein bL32 family.

The sequence is that of Large ribosomal subunit protein bL32 from Psychrobacter sp. (strain PRwf-1).